Reading from the N-terminus, the 95-residue chain is Small integral membrane protein 26 (95 aa).

The chain crosses the membrane as a helical span at residues methionine 13–methionine 35.

The protein belongs to the SMIM26 family. Interacts with AGK and SLC25A11. Detected in kidney (at protein level).

It is found in the mitochondrion outer membrane. Its function is as follows. May play a role in cell viability. This chain is Small integral membrane protein 26, found in Homo sapiens (Human).